The primary structure comprises 567 residues: Myo-inositol transporter 1 (567 aa).

Residues 1-88 are Cytoplasmic-facing; that stretch reads MSARPAQPNI…KFVWMLVSAA (88 aa). The tract at residues 14 to 42 is disordered; sequence IRTSLSGYPSPTHSGSSTPASLEFSDGRL. Positions 16-33 are enriched in polar residues; it reads TSLSGYPSPTHSGSSTPA. Residues 89–109 form a helical membrane-spanning segment; the sequence is AISGLLFGYDTAAISGMLVII. The Extracellular portion of the chain corresponds to 110–123; the sequence is KDDLGTILSSWQKE. A helical membrane pass occupies residues 124-144; sequence VITSATTLGALLGGLAAGCVS. Residues 145–150 lie on the Cytoplasmic side of the membrane; that stretch reads DFTGRR. The chain crosses the membrane as a helical span at residues 151-171; that stretch reads LVIVFANVAFIGGSICQAACH. Topologically, residues 172-180 are extracellular; the sequence is TVAAMIAGR. A helical transmembrane segment spans residues 181–201; it reads FIVGLGVGLASCIVPLYIGEL. The Cytoplasmic portion of the chain corresponds to 202-209; that stretch reads APTMIRGR. Residues 210-230 form a helical membrane-spanning segment; sequence LVTINCVAVTLGQVVAYAIGA. The Extracellular portion of the chain corresponds to 231-240; sequence SFQNVHNGWR. The helical transmembrane segment at 241–261 threads the bilayer; sequence WIVGLGAMPSFVQLAAIGFLP. Residues 262 to 343 are Cytoplasmic-facing; that stretch reads ESPRILLLRS…IGCGLQAAQQ (82 aa). A helical membrane pass occupies residues 344 to 364; sequence LCGFNTLMYYSATIFAMLGFN. The N-linked (GlcNAc...) asparagine glycan is linked to Asn-365. At 365 to 367 the chain is on the extracellular side; that stretch reads NAT. A helical transmembrane segment spans residues 368 to 388; the sequence is AVGLIVATVNVLFTLVALKIV. Over 389-397 the chain is Cytoplasmic; sequence DPVGRRRTM. A helical membrane pass occupies residues 398 to 418; that stretch reads LFTLPIMILALVFAAIFFYYL. At 419–435 the chain is on the extracellular side; that stretch reads TLSTNGILIEDHDYPRS. A helical membrane pass occupies residues 436-456; that stretch reads LSILVLLSMLLYVAGYATGLG. Topologically, residues 457–476 are cytoplasmic; sequence NIPWQQGELFRLEVRGIGTS. The helical transmembrane segment at 477–497 threads the bilayer; that stretch reads ICTAVNWSCNMLIAGTFLSLM. At 498-503 the chain is on the extracellular side; it reads DAATPS. Residues 504 to 524 traverse the membrane as a helical segment; the sequence is GAFGIYAGFCVIGWVFCWMLY. Residues 525 to 567 are Cytoplasmic-facing; the sequence is PETSGLSLEEVYFVFEEGFGIKKSQQLRKQKLVEAAKLKAIFE.

Belongs to the major facilitator superfamily. Sugar transporter (TC 2.A.1.1) family.

The protein resides in the cell membrane. The enzyme catalyses myo-inositol(out) + H(+)(out) = myo-inositol(in) + H(+)(in). May function as a transporter or as a sensor for myo-inositol. This chain is Myo-inositol transporter 1, found in Cryptococcus neoformans var. grubii serotype A (strain H99 / ATCC 208821 / CBS 10515 / FGSC 9487) (Filobasidiella neoformans var. grubii).